The primary structure comprises 330 residues: Putative [LysW]-L-2-aminoadipate/[LysW]-L-glutamate phosphate reductase (330 aa).

10–13 serves as a coordination point for NADP(+); it reads SGYI. The active site involves C142. N297 contributes to the NADP(+) binding site.

The protein belongs to the NAGSA dehydrogenase family. Type 1 subfamily. LysY sub-subfamily.

The protein localises to the cytoplasm. It carries out the reaction [amino-group carrier protein]-C-terminal-N-(1-carboxy-5-oxopentan-1-yl)-L-glutamine + phosphate + NADP(+) = [amino-group carrier protein]-C-terminal-N-(1-carboxy-5-phosphooxy-5-oxopentan-1-yl)-L-glutamine + NADPH + H(+). The catalysed reaction is [amino-group carrier protein]-C-terminal-gamma-(L-glutamyl-5-semialdehyde)-L-glutamate + phosphate + NADP(+) = [amino-group carrier protein]-C-terminal-gamma-(5-phospho-L-glutamyl)-L-glutamate + NADPH + H(+). The protein operates within amino-acid biosynthesis; L-lysine biosynthesis via AAA pathway; L-lysine from L-alpha-aminoadipate (Thermus route): step 3/5. Its pathway is amino-acid biosynthesis; L-arginine biosynthesis. Involved in both the arginine and lysine biosynthetic pathways. The protein is Putative [LysW]-L-2-aminoadipate/[LysW]-L-glutamate phosphate reductase of Pyrococcus horikoshii (strain ATCC 700860 / DSM 12428 / JCM 9974 / NBRC 100139 / OT-3).